The sequence spans 347 residues: Probable nitronate monooxygenase (347 aa).

Residues N69, Q171, G176, G213, and 232-235 (QIGS) each bind FMN.

It belongs to the nitronate monooxygenase family. NMO class I subfamily. The cofactor is FMN.

It catalyses the reaction 3 propionate 3-nitronate + 3 O2 + H2O = 3 3-oxopropanoate + 2 nitrate + nitrite + H2O2 + 3 H(+). Its function is as follows. Nitronate monooxygenase that uses molecular oxygen to catalyze the oxidative denitrification of alkyl nitronates. Acts on propionate 3-nitronate (P3N), the presumed physiological substrate. Probably functions in the detoxification of P3N, a metabolic poison produced by plants and fungi as a defense mechanism. This Bacillus subtilis (strain 168) protein is Probable nitronate monooxygenase (yrpB).